The chain runs to 516 residues: Importin subunit alpha-B (516 aa).

Residues 1–29 (MQRSKQETRKSQYKKSIDSDESRRKREEA) show a composition bias toward basic and acidic residues. The segment at 1–54 (MQRSKQETRKSQYKKSIDSDESRRKREEASLSIRKNKREESLLKKRTQAVPGST) is disordered. One can recognise an IBB domain in the interval 1–55 (MQRSKQETRKSQYKKSIDSDESRRKREEASLSIRKNKREESLLKKRTQAVPGSTP). ARM repeat units follow at residues 55-96 (PVKV…KLLS), 100-140 (SPPI…NIAS), 143-182 (PEQT…NIAG), 185-227 (HYCR…NFCR), 229-268 (KPQP…YLSD), 271-310 (NERI…NIVT), 313-352 (DNQT…NITA), 355-394 (KNQI…NATS), and 398-437 (PQQI…NILV). A disordered region spans residues 490–516 (EQEDEGDLMPEGSSFSFSNQTNSNFNL). Over residues 502 to 516 (SSFSFSNQTNSNFNL) the composition is skewed to low complexity.

It belongs to the importin alpha family. Forms a complex with tnpo/importin subunit beta.

Its subcellular location is the cytoplasm. It is found in the nucleus envelope. Functions in nuclear protein import via a substrate-importin alpha-beta transport complex that passes though the nuclear pore complexes (NPC). Binds specifically and directly to substrates containing either a simple or bipartite NLS motif. The chain is Importin subunit alpha-B from Dictyostelium discoideum (Social amoeba).